Reading from the N-terminus, the 222-residue chain is Large ribosomal subunit protein uL3 (222 aa).

The tract at residues 129–150 is disordered; that stretch reads HNFRGLPDSHGTERKHRSPGSI.

It belongs to the universal ribosomal protein uL3 family. In terms of assembly, part of the 50S ribosomal subunit. Forms a cluster with proteins L14 and L19.

One of the primary rRNA binding proteins, it binds directly near the 3'-end of the 23S rRNA, where it nucleates assembly of the 50S subunit. This chain is Large ribosomal subunit protein uL3, found in Acidothermus cellulolyticus (strain ATCC 43068 / DSM 8971 / 11B).